The sequence spans 132 residues: Ribosome-binding factor A (132 aa).

Belongs to the RbfA family. Monomer. Binds 30S ribosomal subunits, but not 50S ribosomal subunits or 70S ribosomes.

Its subcellular location is the cytoplasm. One of several proteins that assist in the late maturation steps of the functional core of the 30S ribosomal subunit. Associates with free 30S ribosomal subunits (but not with 30S subunits that are part of 70S ribosomes or polysomes). Required for efficient processing of 16S rRNA. May interact with the 5'-terminal helix region of 16S rRNA. This chain is Ribosome-binding factor A, found in Burkholderia multivorans (strain ATCC 17616 / 249).